Consider the following 398-residue polypeptide: CCA-adding enzyme (398 aa).

Positions 32 and 35 each coordinate ATP. 2 residues coordinate CTP: G32 and R35. The Mg(2+) site is built by D45 and D47. Positions 119, 162, 165, 168, and 171 each coordinate ATP. The CTP site is built by R119, D162, R165, R168, and R171.

This sequence belongs to the tRNA nucleotidyltransferase/poly(A) polymerase family. Bacterial CCA-adding enzyme type 3 subfamily. As to quaternary structure, homodimer. Requires Mg(2+) as cofactor.

It catalyses the reaction a tRNA precursor + 2 CTP + ATP = a tRNA with a 3' CCA end + 3 diphosphate. The catalysed reaction is a tRNA with a 3' CCA end + 2 CTP + ATP = a tRNA with a 3' CCACCA end + 3 diphosphate. Functionally, catalyzes the addition and repair of the essential 3'-terminal CCA sequence in tRNAs without using a nucleic acid template. Adds these three nucleotides in the order of C, C, and A to the tRNA nucleotide-73, using CTP and ATP as substrates and producing inorganic pyrophosphate. tRNA 3'-terminal CCA addition is required both for tRNA processing and repair. Also involved in tRNA surveillance by mediating tandem CCA addition to generate a CCACCA at the 3' terminus of unstable tRNAs. While stable tRNAs receive only 3'-terminal CCA, unstable tRNAs are marked with CCACCA and rapidly degraded. This chain is CCA-adding enzyme, found in Lactococcus lactis subsp. lactis (strain IL1403) (Streptococcus lactis).